The chain runs to 424 residues: Homoserine O-succinyltransferase (424 aa).

Residues 67 to 381 (NAVLVCHALN…PHGHDAFLLD (315 aa)) enclose the AB hydrolase-1 domain. S173 acts as the Nucleophile in catalysis. R243 contacts substrate. Catalysis depends on residues D342 and H375. Position 376 (D376) interacts with substrate.

The protein belongs to the AB hydrolase superfamily. MetX family. As to quaternary structure, homodimer.

The protein resides in the cytoplasm. It carries out the reaction L-homoserine + succinyl-CoA = O-succinyl-L-homoserine + CoA. It participates in amino-acid biosynthesis; L-methionine biosynthesis via de novo pathway; O-succinyl-L-homoserine from L-homoserine: step 1/1. In terms of biological role, transfers a succinyl group from succinyl-CoA to L-homoserine, forming succinyl-L-homoserine. In vitro, also has serine succinyl transferase activity. The chain is Homoserine O-succinyltransferase from Bordetella petrii (strain ATCC BAA-461 / DSM 12804 / CCUG 43448).